A 219-amino-acid chain; its full sequence is Small ribosomal subunit protein uS4 (219 aa).

The 63-residue stretch at 112–174 (RRLQTQVLRL…GSSPLMSESH (63 aa)) folds into the S4 RNA-binding domain. Residues 193–219 (KAAAEAKQARERPPERGGGRKKRGGRR) form a disordered region. A compositionally biased stretch (basic and acidic residues) spans 199–210 (KQARERPPERGG).

The protein belongs to the universal ribosomal protein uS4 family. As to quaternary structure, part of the 30S ribosomal subunit. Contacts protein S5. The interaction surface between S4 and S5 is involved in control of translational fidelity.

One of the primary rRNA binding proteins, it binds directly to 16S rRNA where it nucleates assembly of the body of the 30S subunit. Its function is as follows. With S5 and S12 plays an important role in translational accuracy. The protein is Small ribosomal subunit protein uS4 of Methanosarcina mazei (strain ATCC BAA-159 / DSM 3647 / Goe1 / Go1 / JCM 11833 / OCM 88) (Methanosarcina frisia).